Reading from the N-terminus, the 270-residue chain is Phosphatidate cytidylyltransferase (270 aa).

Transmembrane regions (helical) follow at residues 17–37 (FVVL…AILI), 55–75 (FFYV…FEEP), 81–101 (ILFI…SQVF), 104–124 (VAAF…FLPI), 129–149 (GAAN…FAYF), 170–190 (EGVI…RLVV), 193–213 (LLSV…TVAI), and 248–268 (IDGL…LEGV).

The protein belongs to the CDS family.

The protein resides in the cell membrane. It carries out the reaction a 1,2-diacyl-sn-glycero-3-phosphate + CTP + H(+) = a CDP-1,2-diacyl-sn-glycerol + diphosphate. Its pathway is phospholipid metabolism; CDP-diacylglycerol biosynthesis; CDP-diacylglycerol from sn-glycerol 3-phosphate: step 3/3. This Thermotoga maritima (strain ATCC 43589 / DSM 3109 / JCM 10099 / NBRC 100826 / MSB8) protein is Phosphatidate cytidylyltransferase (cdsA).